Reading from the N-terminus, the 192-residue chain is Chromophore lyase CpcS/CpeS 2 (192 aa).

This sequence belongs to the CpcS/CpeS biliprotein lyase family.

Functionally, covalently attaches a chromophore to Cys residue(s) of phycobiliproteins. The chain is Chromophore lyase CpcS/CpeS 2 from Synechocystis sp. (strain ATCC 27184 / PCC 6803 / Kazusa).